A 103-amino-acid polypeptide reads, in one-letter code: Large ribosomal subunit protein bL21 (103 aa).

It belongs to the bacterial ribosomal protein bL21 family. Part of the 50S ribosomal subunit. Contacts protein L20.

Functionally, this protein binds to 23S rRNA in the presence of protein L20. The chain is Large ribosomal subunit protein bL21 from Cupriavidus metallidurans (strain ATCC 43123 / DSM 2839 / NBRC 102507 / CH34) (Ralstonia metallidurans).